Reading from the N-terminus, the 426-residue chain is Serine--tRNA ligase (426 aa).

233-235 (TAE) is an L-serine binding site. 264–266 (RSE) serves as a coordination point for ATP. L-serine is bound at residue Glu-287. 351–354 (EISS) provides a ligand contact to ATP. Ser-387 provides a ligand contact to L-serine.

This sequence belongs to the class-II aminoacyl-tRNA synthetase family. Type-1 seryl-tRNA synthetase subfamily. Homodimer. The tRNA molecule binds across the dimer.

Its subcellular location is the cytoplasm. The catalysed reaction is tRNA(Ser) + L-serine + ATP = L-seryl-tRNA(Ser) + AMP + diphosphate + H(+). It catalyses the reaction tRNA(Sec) + L-serine + ATP = L-seryl-tRNA(Sec) + AMP + diphosphate + H(+). The protein operates within aminoacyl-tRNA biosynthesis; selenocysteinyl-tRNA(Sec) biosynthesis; L-seryl-tRNA(Sec) from L-serine and tRNA(Sec): step 1/1. In terms of biological role, catalyzes the attachment of serine to tRNA(Ser). Is also able to aminoacylate tRNA(Sec) with serine, to form the misacylated tRNA L-seryl-tRNA(Sec), which will be further converted into selenocysteinyl-tRNA(Sec). The protein is Serine--tRNA ligase of Pseudomonas putida (strain ATCC 47054 / DSM 6125 / CFBP 8728 / NCIMB 11950 / KT2440).